The following is a 234-amino-acid chain: Sugar fermentation stimulation protein homolog (234 aa).

Belongs to the SfsA family.

This Shewanella putrefaciens (strain CN-32 / ATCC BAA-453) protein is Sugar fermentation stimulation protein homolog.